Consider the following 371-residue polypeptide: Chaperone protein DnaJ (371 aa).

The J domain occupies 4-68 (DYYKILGVSK…QKRAAYDRFG (65 aa)). The segment at 134–212 (GIEKNISFSS…CHGMGRCHKQ (79 aa)) adopts a CR-type zinc-finger fold. Residues Cys147, Cys150, Cys164, Cys167, Cys186, Cys189, Cys200, and Cys203 each contribute to the Zn(2+) site. CXXCXGXG motif repeat units lie at residues 147–154 (CDTCHGSG), 164–171 (CDACGGVG), 186–193 (CHKCKGNG), and 200–207 (CKKCHGMG).

This sequence belongs to the DnaJ family. In terms of assembly, homodimer. Zn(2+) serves as cofactor.

Its subcellular location is the cytoplasm. Functionally, participates actively in the response to hyperosmotic and heat shock by preventing the aggregation of stress-denatured proteins and by disaggregating proteins, also in an autonomous, DnaK-independent fashion. Unfolded proteins bind initially to DnaJ; upon interaction with the DnaJ-bound protein, DnaK hydrolyzes its bound ATP, resulting in the formation of a stable complex. GrpE releases ADP from DnaK; ATP binding to DnaK triggers the release of the substrate protein, thus completing the reaction cycle. Several rounds of ATP-dependent interactions between DnaJ, DnaK and GrpE are required for fully efficient folding. Also involved, together with DnaK and GrpE, in the DNA replication of plasmids through activation of initiation proteins. This chain is Chaperone protein DnaJ, found in Rickettsia akari (strain Hartford).